Reading from the N-terminus, the 388-residue chain is Basigin (388 aa).

An N-terminal signal peptide occupies residues 1–22; sequence MAAALLLALAFTFLSGQGACAA. The Extracellular segment spans residues 23 to 326; sequence AGFLKAPMSQ…ISLRVRSRLA (304 aa). The region spanning 37–120 is the Ig-like domain; it reads GGSVVLHCEA…SSDPDRNHLT (84 aa). 3 cysteine pairs are disulfide-bonded: C44–C108, C157–C203, and C242–C304. In terms of domain architecture, Ig-like C2-type spans 138-219; the sequence is EPGTIVTSVQ…VGRGNINVEG (82 aa). N160, N269, and N305 each carry an N-linked (GlcNAc...) asparagine glycan. In terms of domain architecture, Ig-like V-type spans 221–320; the sequence is PRIKVGKKSE…GSARETISLR (100 aa). Residues 327 to 347 form a helical membrane-spanning segment; it reads ALWPFLGIVAEVLVLVTIIFI. The Cytoplasmic portion of the chain corresponds to 348 to 388; sequence YEKRRKPDQTLDEDDPGAAPLKGSGSHLNDKDKNVRQRNAT. Residues 355 to 388 form a disordered region; that stretch reads DQTLDEDDPGAAPLKGSGSHLNDKDKNVRQRNAT. T357 bears the Phosphothreonine mark. S371 carries the phosphoserine modification.

As to quaternary structure, homooligomer. Interacts with NXNL1, SLC2A1 and SLC16A1/GLUT1. Interacts with XKR8; promoting its localization at the cell membrane. Homooligomer. Interacts with SLC16A1; interaction mediates SLC16A1 targeting to the plasma membrane. Interacts with SLC16A3; interaction mediates SLC16A3 targeting to the plasma membrane. Interacts with VEGFA, KDR/VEGFR2, PPIA/CYPA, SLC16A12, SLC16A11, ATP1B2, MAG, L1CAM and AJAP1. Interacts with PPIL2; regulates BSG transport to the cell membrane. In terms of assembly, interacts with SLC16A6; this interaction mediates targeting to the plasma membrane. Expressed in the skeletal muscle, liver, small intestine, kidney, testis, brain, heart and spleen. Also present in various immature cells and endothelia.

It localises to the cell membrane. It is found in the photoreceptor inner segment. Its subcellular location is the cell projection. The protein localises to the cilium. The protein resides in the photoreceptor outer segment. It localises to the endoplasmic reticulum membrane. It is found in the basolateral cell membrane. Functionally, essential for normal retinal maturation and development. Acts as a retinal cell surface receptor for NXNL1 and plays an important role in NXNL1-mediated survival of retinal cone photoreceptors. In association with glucose transporter SLC16A1/GLUT1 and NXNL1, promotes retinal cone survival by enhancing aerobic glycolysis and accelerating the entry of glucose into photoreceptors. Its function is as follows. Signaling receptor for cyclophilins, essential for PPIA/CYPA and PPIB/CYPB-dependent signaling related to chemotaxis and adhesion of immune cells. Plays an important role in targeting the monocarboxylate transporters SLC16A1/GLUT1 and SLC16A3 to the plasma membrane. Acts as a coreceptor for vascular endothelial growth factor receptor 2 (KDR/VEGFR2) in endothelial cells enhancing its VEGFA-mediated activation and downstream signaling. Promotes angiogenesis through EPAS1/HIF2A-mediated up-regulation of VEGFA and KDR/VEGFR2 in endothelial cells. Plays an important role in spermatogenesis; mediates interactions between germ cells and Sertoli cell and is essential for the development/differentiation of germ cells to round spermatids. In Rattus norvegicus (Rat), this protein is Basigin (Bsg).